The following is a 396-amino-acid chain: Obg-like ATPase 1 (396 aa).

One can recognise an OBG-type G domain in the interval 23–283 (LKIGIVGLPN…MSAEEKQKYL (261 aa)). 32–37 (NVGKST) provides a ligand contact to ATP. Mg(2+) contacts are provided by Ser-36 and Thr-56. Leu-231 provides a ligand contact to ATP. The Nuclear export signal motif lies at 267-274 (LELKLQDM). Positions 304-387 (QLEYFFTAGP…EDGDIIFFKF (84 aa)) constitute a TGS domain.

Belongs to the TRAFAC class OBG-HflX-like GTPase superfamily. OBG GTPase family. YchF/OLA1 subfamily. In terms of assembly, monomer. It depends on Mg(2+) as a cofactor.

The protein resides in the cytoplasm. It is found in the nucleus. Its subcellular location is the nucleolus. In terms of biological role, hydrolyzes ATP, and can also hydrolyze GTP with lower efficiency. Has lower affinity for GTP. The polypeptide is Obg-like ATPase 1 (Gallus gallus (Chicken)).